We begin with the raw amino-acid sequence, 932 residues long: 2-oxoglutarate dehydrogenase E1 component (932 aa).

The protein belongs to the alpha-ketoglutarate dehydrogenase family. Homodimer. Part of the 2-oxoglutarate dehydrogenase (OGDH) complex composed of E1 (2-oxoglutarate dehydrogenase), E2 (dihydrolipoamide succinyltransferase) and E3 (dihydrolipoamide dehydrogenase); the complex contains multiple copies of the three enzymatic components (E1, E2 and E3). Thiamine diphosphate is required as a cofactor.

The catalysed reaction is N(6)-[(R)-lipoyl]-L-lysyl-[protein] + 2-oxoglutarate + H(+) = N(6)-[(R)-S(8)-succinyldihydrolipoyl]-L-lysyl-[protein] + CO2. Its function is as follows. E1 component of the 2-oxoglutarate dehydrogenase (OGDH) complex which catalyzes the decarboxylation of 2-oxoglutarate, the first step in the conversion of 2-oxoglutarate to succinyl-CoA and CO(2). This is 2-oxoglutarate dehydrogenase E1 component from Staphylococcus aureus (strain MRSA252).